The following is a 433-amino-acid chain: tRNA modification GTPase MnmE (433 aa).

3 residues coordinate (6S)-5-formyl-5,6,7,8-tetrahydrofolate: arginine 24, glutamate 86, and lysine 125. One can recognise a TrmE-type G domain in the interval 218 to 363 (GARLALIGAP…LKEALREALL (146 aa)). Asparagine 228 provides a ligand contact to K(+). Residues 228–233 (NAGKSS), 247–253 (SPIPGTT), and 272–275 (DTAG) each bind GTP. Serine 232 serves as a coordination point for Mg(2+). 3 residues coordinate K(+): serine 247, isoleucine 249, and threonine 252. Threonine 253 serves as a coordination point for Mg(2+). Residue lysine 433 participates in (6S)-5-formyl-5,6,7,8-tetrahydrofolate binding.

Belongs to the TRAFAC class TrmE-Era-EngA-EngB-Septin-like GTPase superfamily. TrmE GTPase family. In terms of assembly, homodimer. Heterotetramer of two MnmE and two MnmG subunits. Requires K(+) as cofactor.

Its subcellular location is the cytoplasm. Its function is as follows. Exhibits a very high intrinsic GTPase hydrolysis rate. Involved in the addition of a carboxymethylaminomethyl (cmnm) group at the wobble position (U34) of certain tRNAs, forming tRNA-cmnm(5)s(2)U34. In Thermus thermophilus (strain ATCC BAA-163 / DSM 7039 / HB27), this protein is tRNA modification GTPase MnmE.